We begin with the raw amino-acid sequence, 152 residues long: UPF0266 membrane protein YobD (152 aa).

Residues 1-5 (MTITD) are Periplasmic-facing. The helical transmembrane segment at 6 to 26 (LVLILFIAALLAYALYDQFIM) threads the bilayer. The Cytoplasmic portion of the chain corresponds to 27 to 44 (PRRNGPTLLSIALLRRGR). The helical transmembrane segment at 45-65 (IDSVIFVGLVAILIYNNVTSH) threads the bilayer. Gly66 is a topological domain (periplasmic). Residues 67–87 (AQMTTWLLSALALMGFYIFWI) traverse the membrane as a helical segment. Residues 88 to 152 (RTPRIIFKQR…KIYKLLIENQ (65 aa)) lie on the Cytoplasmic side of the membrane.

Belongs to the UPF0266 family.

It is found in the cell inner membrane. This chain is UPF0266 membrane protein YobD (yobD), found in Salmonella typhi.